The sequence spans 872 residues: Trichohyalin-like protein 1 (872 aa).

One can recognise an EF-hand domain in the interval C46 to V81. A compositionally biased stretch (polar residues) spans Q117 to D127. Disordered regions lie at residues Q117–A759, L774–D813, and E830–Q872. Basic and acidic residues-rich tracts occupy residues S142–P155, L164–Q190, T218–A235, G296–L307, A324–D348, R365–E375, E399–E435, and S486–D505. Residues N538–E570 are compositionally biased toward polar residues. Composition is skewed to basic and acidic residues over residues T571–Q584, R592–G608, and T664–D684. Polar residues-rich tracts occupy residues E699 to C708 and S718 to S729. Basic and acidic residues predominate over residues T730 to E751. Composition is skewed to polar residues over residues L774 to V793 and N801 to S812. Over residues L849 to K865 the composition is skewed to basic and acidic residues.

It belongs to the S-100 family.

The sequence is that of Trichohyalin-like protein 1 (TCHHL1) from Bos taurus (Bovine).